The chain runs to 305 residues: UDP-3-O-acyl-N-acetylglucosamine deacetylase (305 aa).

H78, H237, and D241 together coordinate Zn(2+). The active-site Proton donor is the H264.

Belongs to the LpxC family. The cofactor is Zn(2+).

It carries out the reaction a UDP-3-O-[(3R)-3-hydroxyacyl]-N-acetyl-alpha-D-glucosamine + H2O = a UDP-3-O-[(3R)-3-hydroxyacyl]-alpha-D-glucosamine + acetate. Its pathway is glycolipid biosynthesis; lipid IV(A) biosynthesis; lipid IV(A) from (3R)-3-hydroxytetradecanoyl-[acyl-carrier-protein] and UDP-N-acetyl-alpha-D-glucosamine: step 2/6. Functionally, catalyzes the hydrolysis of UDP-3-O-myristoyl-N-acetylglucosamine to form UDP-3-O-myristoylglucosamine and acetate, the committed step in lipid A biosynthesis. The chain is UDP-3-O-acyl-N-acetylglucosamine deacetylase from Burkholderia pseudomallei (strain 668).